Reading from the N-terminus, the 140-residue chain is 3-hydroxyacyl-[acyl-carrier-protein] dehydratase FabZ (140 aa).

The active site involves H48.

It belongs to the thioester dehydratase family. FabZ subfamily.

It is found in the cytoplasm. It catalyses the reaction a (3R)-hydroxyacyl-[ACP] = a (2E)-enoyl-[ACP] + H2O. Its function is as follows. Involved in unsaturated fatty acids biosynthesis. Catalyzes the dehydration of short chain beta-hydroxyacyl-ACPs and long chain saturated and unsaturated beta-hydroxyacyl-ACPs. This Halalkalibacterium halodurans (strain ATCC BAA-125 / DSM 18197 / FERM 7344 / JCM 9153 / C-125) (Bacillus halodurans) protein is 3-hydroxyacyl-[acyl-carrier-protein] dehydratase FabZ.